We begin with the raw amino-acid sequence, 1034 residues long: Potassium-transporting ATPase alpha chain 1 (1034 aa).

The Cytoplasmic portion of the chain corresponds to Gly-2–Pro-97. Residues Tyr-7 and Tyr-10 each carry the phosphotyrosine modification. Positions Glu-13–Glu-40 are disordered. The segment covering Met-26–Lys-39 has biased composition (basic residues). Ser-27 carries the phosphoserine; by PKA and PKC modification. A helical membrane pass occupies residues Glu-98 to Ala-118. At Ala-119–Tyr-141 the chain is on the lumenal side. A helical transmembrane segment spans residues Leu-142–Phe-162. Residues Lys-163–Ile-298 lie on the Cytoplasmic side of the membrane. Positions Lys-222–Glu-244 are disordered. Residues Asn-225–Pro-239 show a composition bias toward polar residues. A helical transmembrane segment spans residues Glu-299 to Ile-318. At Val-319–Ala-330 the chain is on the lumenal side. The helical transmembrane segment at Met-331 to Ala-348 threads the bilayer. K(+)-binding residues include Val-339, Ala-340, Val-342, and Glu-344. Residues Thr-349–Leu-782 lie on the Cytoplasmic side of the membrane. Residue Asp-386 is the 4-aspartylphosphate intermediate of the active site. 2 residues coordinate Mg(2+): Asp-386 and Thr-388. A phosphoserine mark is found at Ser-462 and Ser-600. 2 residues coordinate Mg(2+): Asp-727 and Asp-731. Residues Lys-783–Ile-802 form a helical membrane-spanning segment. Glu-796 serves as a coordination point for K(+). Residues Tyr-803–Leu-812 are Lumenal-facing. The helical transmembrane segment at Gly-813–Ala-833 threads the bilayer. Glu-821 contributes to the K(+) binding site. At Tyr-834–Arg-853 the chain is on the cytoplasmic side. Ser-839 bears the Phosphoserine mark. The chain crosses the membrane as a helical span at residues Leu-854–Phe-876. The Lumenal portion of the chain corresponds to Thr-877–Cys-928. The chain crosses the membrane as a helical span at residues Tyr-929–Lys-948. At Thr-949–Asn-962 the chain is on the cytoplasmic side. Ser-953 is modified (phosphoserine; by PKA). Residues Arg-963 to Tyr-981 form a helical membrane-spanning segment. Residues Cys-982–Phe-996 lie on the Lumenal side of the membrane. A helical membrane pass occupies residues Gln-997–Lys-1017. Residues Leu-1018–Tyr-1034 are Cytoplasmic-facing.

Belongs to the cation transport ATPase (P-type) (TC 3.A.3) family. Type IIC subfamily. In terms of assembly, the gastric H(+)/K(+) ATPase pump is composed of the catalytic alpha subunit ATP4A and the regulatory beta subunit ATP4B. Interacts (via the P-domain) with ATP4B (via N-terminus); this interaction stabilizes the lumenal-open E2 conformation state and prevents the reverse reaction of the transport cycle.

The protein localises to the apical cell membrane. The protein resides in the cell membrane. The catalysed reaction is K(+)(out) + ATP + H2O + H(+)(in) = K(+)(in) + ADP + phosphate + 2 H(+)(out). Down-regulated by K(+)-competitive acid blockers (P-CABs) such as vonoprazan. The catalytic subunit of the gastric H(+)/K(+) ATPase pump which transports H(+) ions in exchange for K(+) ions across the apical membrane of parietal cells. Uses ATP as an energy source to pump H(+) ions to the gastric lumen while transporting K(+) ion from the lumen into the cell. Remarkably generates a million-fold proton gradient across the gastric parietal cell membrane, acidifying the gastric juice down to pH 1. Within a transport cycle, the transfer of a H(+) ion across the membrane is coupled to ATP hydrolysis and is associated with a transient phosphorylation that shifts the pump conformation from inward-facing (E1) to outward-facing state (E2). The release of the H(+) ion in the stomach lumen is followed by binding of K(+) ion converting the pump conformation back to the E1 state. This Sus scrofa (Pig) protein is Potassium-transporting ATPase alpha chain 1 (ATP4A).